A 498-amino-acid chain; its full sequence is Cytochrome P450 monooxygenase 71 (498 aa).

A helical membrane pass occupies residues 7–24; sequence YVFALLGILATLYFVRWS. Asn425 is a glycosylation site (N-linked (GlcNAc...) asparagine). Cys440 provides a ligand contact to heme.

This sequence belongs to the cytochrome P450 family. Requires heme as cofactor.

The protein localises to the membrane. Its pathway is secondary metabolite biosynthesis. Functionally, cytochrome P450 monooxygenase that is able to use dehydroabietic acid and testosterone as substrates for oxidation, suggesting that the natural substrate(s) may be structurally related to steroid compounds. This Postia placenta (strain ATCC 44394 / Madison 698-R) (Brown rot fungus) protein is Cytochrome P450 monooxygenase 71.